The primary structure comprises 498 residues: ADP,ATP carrier protein 1 (498 aa).

Residues 1-33 lie on the Cytoplasmic side of the membrane; sequence MSTTKSDNYISELRKVIWPIERYENKKFLPMAF. The helical transmembrane segment at 34–54 threads the bilayer; the sequence is MMFCILLNYSTLRSIKDGFVV. Cysteines 37 and 85 form a disulfide. The Extracellular segment spans residues 55–67; that stretch reads TDIGAEAISFLKT. Residues 68-88 traverse the membrane as a helical segment; that stretch reads YIVLPSAVIAMIVYVKLCDIL. At 89–92 the chain is on the cytoplasmic side; the sequence is KQEN. Residues 93-113 traverse the membrane as a helical segment; that stretch reads VFYVITSFFLAYFALFAFVLY. Residues 114–147 lie on the Extracellular side of the membrane; sequence PNPDLVHPNPEAIESLSLAYPNFKWFIRIVGKWS. The chain crosses the membrane as a helical span at residues 148 to 168; the sequence is FASFYTMAELWGTLMLSLLFW. Over 169–184 the chain is Cytoplasmic; the sequence is QFANQITKTDEAKRFY. The chain crosses the membrane as a helical span at residues 185–205; sequence SMFGLLANLALPVTSLIIGYF. Residues 206–218 are Extracellular-facing; it reads LHEKTQIVAEHLK. A helical transmembrane segment spans residues 219–239; it reads FTPLFVIMIISSLAVILTYRW. The Cytoplasmic portion of the chain corresponds to 240–279; that stretch reads MNKNVLTDPKLYDPALVKGKKAKAKMSLIESFKMIFTSKY. Residues 280–300 form a helical membrane-spanning segment; the sequence is VGYIALLLIAYGISVNLVEGV. The Extracellular segment spans residues 301 to 320; that stretch reads WKSKLKELHPTKEAYTMYMG. The chain crosses the membrane as a helical span at residues 321–341; the sequence is QFQAYQGWVAIAFMIIGSNIL. The Cytoplasmic portion of the chain corresponds to 342 to 348; that stretch reads RKVSWLT. A helical membrane pass occupies residues 349-369; the sequence is AAMITPLMMLITGIAFFAFIF. At 370-379 the chain is on the extracellular side; that stretch reads FDSVIAMYLT. The helical transmembrane segment at 380-400 threads the bilayer; sequence GILASGPLALAVMIGTIQNVL. Residues 401-438 lie on the Cytoplasmic side of the membrane; sequence SKGVKYSLFDATKNMAYIPLDKDLRVKGQAAVEVIGGR. 436–442 contributes to the ATP binding site; that stretch reads GGRFGKS. A helical membrane pass occupies residues 439-459; sequence FGKSGGAIIQSTFFIIFPALG. Topologically, residues 460–465 are extracellular; the sequence is FVEATP. Residues 466–486 traverse the membrane as a helical segment; the sequence is YFASIFFVIVILWIYAVKGLN. Topologically, residues 487–498 are cytoplasmic; sequence KEYQVLVNNTEK.

The protein belongs to the ADP/ATP translocase tlc family.

It localises to the cell membrane. Its function is as follows. Provides the rickettsial cell with host ATP in exchange for rickettsial ADP. This is an obligate exchange system. This energy acquiring activity is an important component of rickettsial parasitism. The polypeptide is ADP,ATP carrier protein 1 (tlcA) (Rickettsia bellii (strain RML369-C)).